The sequence spans 299 residues: Leucine zipper transcription factor-like protein 1 (299 aa).

The stretch at 96–296 forms a coiled coil; that stretch reads LKLQTDISEL…DLRKRLAQYE (201 aa). Positions 145–299 are interaction with BSS9; sequence GTAELLNKEI…KRLAQYEPED (155 aa).

The protein belongs to the LZTFL1 family. As to quaternary structure, self-associates. Interacts with BBS9; the interaction mediates the association of LZTL1 with the BBsome complex and regulates BBSome ciliary trafficking.

It is found in the cytoplasm. In terms of biological role, regulates ciliary localization of the BBSome complex. Together with the BBSome complex, controls SMO ciliary trafficking and contributes to the sonic hedgehog (SHH) pathway regulation. May play a role in neurite outgrowth. May have tumor suppressor function. The chain is Leucine zipper transcription factor-like protein 1 (LZTFL1) from Pongo abelii (Sumatran orangutan).